A 530-amino-acid polypeptide reads, in one-letter code: Sugar transport protein MST6 (530 aa).

Residues 1–18 (MAGGVVVNNGGGKDYPGK) are Cytoplasmic-facing. The chain crosses the membrane as a helical span at residues 19 to 39 (LTMFVLFACIVAATGGLIFGY). Residues 40 to 81 (DIGISGGVTSMNPFLIKFFPSVYRKEQAAEKNQSNQYCKFDS) are Extracellular-facing. Residues 82–102 (PLLTMFTSSLYLAALVASFFA) traverse the membrane as a helical segment. Topologically, residues 103–119 (STVTRVAGRKWSMFGGG) are cytoplasmic. Residues 120-140 (VTFLVGAALNGAAKNVLMLIL) form a helical membrane-spanning segment. Topologically, residues 141–142 (GR) are extracellular. Residues 143-163 (VLLGVGVGFANQSVPLYLSEM) traverse the membrane as a helical segment. Topologically, residues 164 to 169 (APARLR) are cytoplasmic. Residues 170–190 (GMLNIGFQLMITIGILCANLI) form a helical membrane-spanning segment. Topologically, residues 191 to 204 (NYGTAKIKGGWGWR) are extracellular. Residues 205–225 (VSLALAAVPAAIIAVGALFLP) traverse the membrane as a helical segment. The Cytoplasmic segment spans residues 226 to 291 (DTPNSLIDRG…YRPQLTMAIA (66 aa)). A helical transmembrane segment spans residues 292–312 (IPLFQQLTGINVIMFYAPVLF). Topologically, residues 313–323 (KTLGFADDASL) are extracellular. The chain crosses the membrane as a helical span at residues 324–344 (MSAVITGLVNVFATFVSIVTV). Residues 345–359 (DRLGRRKLFLQGGTQ) lie on the Cytoplasmic side of the membrane. Residues 360 to 380 (MLACQIVVGSLIGAKFGFSGV) form a helical membrane-spanning segment. Residues 381–388 (ADIPKAYA) lie on the Extracellular side of the membrane. A helical membrane pass occupies residues 389–409 (AFVVLFICAYVAGFAWSWGPL). Topologically, residues 410-428 (GWLVPSEIFPLEIRSAGQS) are cytoplasmic. A helical transmembrane segment spans residues 429–449 (INVSVNMLFTFIIAQAFLPML). The Extracellular segment spans residues 450 to 453 (CRFK). A helical transmembrane segment spans residues 454 to 474 (FILFFFFGAWVVIMTLFVAFF). Residues 475-530 (LPETKNVPIEEMVLVWKSHWYWGRFIRDEDVHVGADVEMPAAGNRNGKVDPAKLAN) lie on the Cytoplasmic side of the membrane.

It belongs to the major facilitator superfamily. Sugar transporter (TC 2.A.1.1) family. As to expression, expressed in leaf blades, leaf sheaths, anthers, ovaries and embryos. Expressed at low levels in roots and shoots.

The protein resides in the cell membrane. Mediates active uptake of hexoses by sugar:proton symport. Can transport glucose, fructose, mannose, galactose, xylose and ribose. The chain is Sugar transport protein MST6 from Oryza sativa subsp. japonica (Rice).